The chain runs to 295 residues: Ankyrin repeat and SOCS box protein 17 (295 aa).

The ANK repeat unit spans residues 146 to 176; sequence SGITPLLYVAQTRQSNILKILLQYGILEREK. The region spanning 243-295 is the SOCS box domain; that stretch reads DYIPPTRYKDPCELVHLCRITIRTQLLANNMLPNGIFSLLIPTRLQNFLNLES.

This sequence belongs to the ankyrin SOCS box (ASB) family. As to expression, specifically expressed in testis. Localizes to spermatogenic cells in testis, with highest expression in round spermatids and condensing spermatids and lower expression in pachytene spermatocytes.

The protein operates within protein modification; protein ubiquitination. In terms of biological role, may be a substrate-recognition component of a SCF-like ECS (Elongin-Cullin-SOCS-box protein) E3 ubiquitin-protein ligase complex which mediates the ubiquitination and subsequent proteasomal degradation of target proteins. This Mus musculus (Mouse) protein is Ankyrin repeat and SOCS box protein 17 (Asb17).